Consider the following 839-residue polypeptide: Transcription regulator protein BACH2 (839 aa).

Positions 37–103 (CDVTLIVERK…AYTAKLLLSR (67 aa)) constitute a BTB domain. Disordered regions lie at residues 150 to 170 (QRPQ…EETM) and 247 to 331 (HGTS…LDRS). Residues 161 to 170 (GEEEEEEETM) are compositionally biased toward acidic residues. The segment covering 247 to 263 (HGTSGFASTFSEDSPGN) has biased composition (polar residues). The span at 297–312 (TDIKDRPGDVEMDRKQ) shows a compositional bias: basic and acidic residues. At Ser-314 the chain carries Phosphoserine. Low complexity predominate over residues 321 to 331 (TPTGAACLDRS). Residues Lys-381 and Lys-420 each participate in a glycyl lysine isopeptide (Lys-Gly) (interchain with G-Cter in SUMO2) cross-link. Ser-520 carries the phosphoserine modification. A disordered region spans residues 582 to 609 (QSYGTNSSDESGSFSEADSESCPVQDRG). A compositionally biased stretch (polar residues) spans 583–597 (SYGTNSSDESGSFSE). The bZIP domain occupies 645 to 708 (FIHDIRRRSK…GELLDNFSCL (64 aa)). Residues 650-666 (RRRSKNRIAAQRCRKRK) form a basic motif region. Residues 670–677 (IQNLECEI) form a leucine-zipper region. Positions 778–813 (PWVPSNTSENCTSGRRLEGSDPGTFSERGPPLEARS) are disordered. Residues 781–790 (PSNTSENCTS) are compositionally biased toward polar residues. The Nuclear export signal motif lies at 819-839 (DFCQEMTEKCTTDEQPRKDYA).

Belongs to the bZIP family. CNC subfamily. As to quaternary structure, homodimer; disulfide-linked. Heterodimer of BACH2 and Maf-related transcription factors. In terms of processing, the reversible disulfide bond may provide a mechanism to regulate the activity in oxidative stress responses. Phosphorylation at Ser-520 downstream of the PI-3K pathway promotes nuclear export. As to expression, detected in brain and spleen.

It localises to the cytoplasm. The protein resides in the nucleus. Functionally, transcriptional regulator that acts as a repressor or activator. Binds to Maf recognition elements (MARE). Plays an important role in coordinating transcription activation and repression by MAFK. Induces apoptosis in response to oxidative stress through repression of the antiapoptotic factor HMOX1. Positively regulates the nuclear import of actin. Is a key regulator of adaptive immunity, crucial for the maintenance of regulatory T-cell function and B-cell maturation. The polypeptide is Transcription regulator protein BACH2 (Bach2) (Mus musculus (Mouse)).